We begin with the raw amino-acid sequence, 165 residues long: Large ribosomal subunit protein uL10 (165 aa).

It belongs to the universal ribosomal protein uL10 family. In terms of assembly, part of the ribosomal stalk of the 50S ribosomal subunit. The N-terminus interacts with L11 and the large rRNA to form the base of the stalk. The C-terminus forms an elongated spine to which L12 dimers bind in a sequential fashion forming a multimeric L10(L12)X complex.

Its function is as follows. Forms part of the ribosomal stalk, playing a central role in the interaction of the ribosome with GTP-bound translation factors. In Shewanella piezotolerans (strain WP3 / JCM 13877), this protein is Large ribosomal subunit protein uL10.